We begin with the raw amino-acid sequence, 138 residues long: MMWWAIWCVMVVVSSAASAAPAPDSAPMDLVQIDSAGPDDESLGYAVSSLEGRYGAEAPWLYLLAEMPRDSQIGRAAVKRRMPSLSIDLPMSVLRQKLSLEKERKVHALRAAANRNFLNDIGKRGLQWSRSEQPSAYY.

The N-terminal stretch at 1–19 is a signal peptide; that stretch reads MMWWAIWCVMVVVSSAASA. A propeptide spanning residues 20–78 is cleaved from the precursor; it reads APAPDSAPMDLVQIDSAGPDDESLGYAVSSLEGRYGAEAPWLYLLAEMPRDSQIGRAAV. Ile-121 is modified (isoleucine amide). Residues 125-138 constitute a propeptide that is removed on maturation; sequence GLQWSRSEQPSAYY.

This sequence belongs to the sauvagine/corticotropin-releasing factor/urotensin I family.

It is found in the secreted. Its function is as follows. Regulation of fluid secretion. This chain is Diuretic hormone 1, found in Manduca sexta (Tobacco hawkmoth).